The following is a 355-amino-acid chain: Green-sensitive opsin (355 aa).

Residues 1–36 (MNGTEGINFYVPMSNKTGVVRSPFEYPQYYLAEPWK) lie on the Extracellular side of the membrane. Residues N2 and N15 are each glycosylated (N-linked (GlcNAc...) asparagine). A helical transmembrane segment spans residues 37 to 61 (YRLVCCYIFFLISTGLPINLLTLLV). Residues 62-73 (TFKHKKLRQPLN) are Cytoplasmic-facing. The chain crosses the membrane as a helical span at residues 74–99 (YILVNLAVADLFMACFGFTVTFYTAW). Topologically, residues 100 to 113 (NGYFVFGPVGCAVE) are extracellular. C110 and C187 are oxidised to a cystine. The chain crosses the membrane as a helical span at residues 114–133 (GFFATLGGQVALWSLVVLAI). Residues 134 to 152 (ERYIVVCKPMGNFRFSATH) lie on the Cytoplasmic side of the membrane. The chain crosses the membrane as a helical span at residues 153-176 (AMMGIAFTWVMAFSCAAPPLFGWS). Over 177–202 (RYMPEGMQCSCGPDYYTHNPDYHNES) the chain is Extracellular. Residues 203-230 (YVLYMFVIHFIIPVVVIFFSYGRLICKV) traverse the membrane as a helical segment. At 231-252 (REAAAQQQESATTQKAEKEVTR) the chain is on the cytoplasmic side. A helical transmembrane segment spans residues 253-276 (MVILMVLGFMLAWTPYAVVAFWIF). At 277–284 (TNKGADFT) the chain is on the extracellular side. The helical transmembrane segment at 285–309 (ATLMAVPAFFSKSSSLYNPIIYVLM) threads the bilayer. K296 bears the N6-(retinylidene)lysine mark. The Cytoplasmic segment spans residues 310–355 (NKQFRNCMITTICCGKNPFGDEDVSSTVSQSKTEVSSVSSSQVSPA).

It belongs to the G-protein coupled receptor 1 family. Opsin subfamily. In terms of processing, phosphorylated on some or all of the serine and threonine residues present in the C-terminal region. In terms of tissue distribution, the color pigments are found in the cone photoreceptor cells.

Its subcellular location is the membrane. Functionally, visual pigments are the light-absorbing molecules that mediate vision. They consist of an apoprotein, opsin, covalently linked to cis-retinal. The polypeptide is Green-sensitive opsin (PRA1) (Gallus gallus (Chicken)).